A 411-amino-acid polypeptide reads, in one-letter code: Tyrosine--tRNA ligase (411 aa).

L-tyrosine is bound at residue Tyr34. A 'HIGH' region motif is present at residues 39 to 48 (CTATSLHIGS). Positions 171 and 175 each coordinate L-tyrosine. Positions 231 to 235 (KMGKT) match the 'KMSKS' region motif. Lys234 is an ATP binding site. An S4 RNA-binding domain is found at 345 to 411 (ISAYELFHEA…GKKRHILVRV (67 aa)).

It belongs to the class-I aminoacyl-tRNA synthetase family. TyrS type 1 subfamily. Homodimer.

It localises to the cytoplasm. It carries out the reaction tRNA(Tyr) + L-tyrosine + ATP = L-tyrosyl-tRNA(Tyr) + AMP + diphosphate + H(+). Catalyzes the attachment of tyrosine to tRNA(Tyr) in a two-step reaction: tyrosine is first activated by ATP to form Tyr-AMP and then transferred to the acceptor end of tRNA(Tyr). This chain is Tyrosine--tRNA ligase, found in Rickettsia africae (strain ESF-5).